We begin with the raw amino-acid sequence, 411 residues long: Translation initiation factor 2 subunit gamma (411 aa).

The tr-type G domain maps to Gln9–Lys203. Residues Gly18–Thr25 form a G1 region. Mg(2+)-binding residues include Asp21, Thr25, Gly46, and Thr48. A GTP-binding site is contributed by Asp21–Thr26. The segment at Gly46 to Lys50 is G2. Residues Cys61, Cys64, Cys73, and Cys76 each contribute to the Zn(2+) site. A G3 region spans residues Asp90–Gly93. GTP contacts are provided by residues Asn146 to Glu149 and Ser181 to Leu183. Residues Asn146–Glu149 form a G4 region. A G5 region spans residues Ser181–Leu183.

The protein belongs to the TRAFAC class translation factor GTPase superfamily. Classic translation factor GTPase family. EIF2G subfamily. As to quaternary structure, heterotrimer composed of an alpha, a beta and a gamma chain. Mg(2+) serves as cofactor.

The enzyme catalyses GTP + H2O = GDP + phosphate + H(+). Its function is as follows. eIF-2 functions in the early steps of protein synthesis by forming a ternary complex with GTP and initiator tRNA. The polypeptide is Translation initiation factor 2 subunit gamma (Pyrococcus furiosus (strain ATCC 43587 / DSM 3638 / JCM 8422 / Vc1)).